The chain runs to 273 residues: Formamidopyrimidine-DNA glycosylase (273 aa).

The active-site Schiff-base intermediate with DNA is the proline 2. Glutamate 3 acts as the Proton donor in catalysis. Lysine 59 serves as the catalytic Proton donor; for beta-elimination activity. Histidine 92 and arginine 111 together coordinate DNA. Residues 239 to 273 form an FPG-type zinc finger; sequence KVYGKTGEPCVICGTPIEKIKLNGRGTHFCPHCQK. The active-site Proton donor; for delta-elimination activity is the arginine 263.

This sequence belongs to the FPG family. In terms of assembly, monomer. Requires Zn(2+) as cofactor.

The catalysed reaction is Hydrolysis of DNA containing ring-opened 7-methylguanine residues, releasing 2,6-diamino-4-hydroxy-5-(N-methyl)formamidopyrimidine.. The enzyme catalyses 2'-deoxyribonucleotide-(2'-deoxyribose 5'-phosphate)-2'-deoxyribonucleotide-DNA = a 3'-end 2'-deoxyribonucleotide-(2,3-dehydro-2,3-deoxyribose 5'-phosphate)-DNA + a 5'-end 5'-phospho-2'-deoxyribonucleoside-DNA + H(+). Its function is as follows. Involved in base excision repair of DNA damaged by oxidation or by mutagenic agents. Acts as a DNA glycosylase that recognizes and removes damaged bases. Has a preference for oxidized purines, such as 7,8-dihydro-8-oxoguanine (8-oxoG). Has AP (apurinic/apyrimidinic) lyase activity and introduces nicks in the DNA strand. Cleaves the DNA backbone by beta-delta elimination to generate a single-strand break at the site of the removed base with both 3'- and 5'-phosphates. The sequence is that of Formamidopyrimidine-DNA glycosylase from Listeria innocua serovar 6a (strain ATCC BAA-680 / CLIP 11262).